Here is a 490-residue protein sequence, read N- to C-terminus: N-succinylglutamate 5-semialdehyde dehydrogenase (490 aa).

Residue 223–228 participates in NAD(+) binding; sequence GSAGTG. Active-site residues include Glu246 and Cys280.

The protein belongs to the aldehyde dehydrogenase family. AstD subfamily.

The catalysed reaction is N-succinyl-L-glutamate 5-semialdehyde + NAD(+) + H2O = N-succinyl-L-glutamate + NADH + 2 H(+). Its pathway is amino-acid degradation; L-arginine degradation via AST pathway; L-glutamate and succinate from L-arginine: step 4/5. In terms of biological role, catalyzes the NAD-dependent reduction of succinylglutamate semialdehyde into succinylglutamate. This Serratia proteamaculans (strain 568) protein is N-succinylglutamate 5-semialdehyde dehydrogenase.